The sequence spans 481 residues: UDP-N-acetylmuramate--L-alanine ligase (481 aa).

135 to 141 (GTHGKTT) provides a ligand contact to ATP.

The protein belongs to the MurCDEF family.

The protein localises to the cytoplasm. The catalysed reaction is UDP-N-acetyl-alpha-D-muramate + L-alanine + ATP = UDP-N-acetyl-alpha-D-muramoyl-L-alanine + ADP + phosphate + H(+). It functions in the pathway cell wall biogenesis; peptidoglycan biosynthesis. Functionally, cell wall formation. The polypeptide is UDP-N-acetylmuramate--L-alanine ligase (Nostoc punctiforme (strain ATCC 29133 / PCC 73102)).